The sequence spans 212 residues: Secreted and transmembrane protein 1b (212 aa).

Residues 1-28 form the signal peptide; it reads MLAYSVTSSGLFPRMLWALLLLAASLNA. Over 29-160 the chain is Extracellular; sequence HNDVWDEPCC…DKPPTAVRTE (132 aa). A disulfide bridge links Cys-38 with Cys-55. Residues Asn-56, Asn-85, Asn-114, and Asn-130 are each glycosylated (N-linked (GlcNAc...) asparagine). Residues 161–181 form a helical membrane-spanning segment; that stretch reads VIIIIAIATTIIITGIGVFVW. The Cytoplasmic segment spans residues 182-212; that stretch reads YKQFPVAPQIQMSVPCLIHGSPGIPYLTLPP.

The protein belongs to the SECTM family. Interacts with CD7.

The protein localises to the cell membrane. It localises to the secreted. Functionally, may be involved in thymocyte signaling. The sequence is that of Secreted and transmembrane protein 1b (Sectm1b) from Mus musculus (Mouse).